Here is a 1106-residue protein sequence, read N- to C-terminus: GYF domain-containing protein gyf-1 (1106 aa).

Polar residues predominate over residues Met1–Pro17. Disordered regions lie at residues Met1–Asp50, Gly160–Val370, and Lys383–Ser434. Positions Arg30–Ser42 are enriched in low complexity. Over residues Leu162–Lys180 the composition is skewed to polar residues. A compositionally biased stretch (gly residues) spans Gly207–Asn224. A compositionally biased stretch (polar residues) spans Ala229–Phe243. Over residues Arg248–Thr261 the composition is skewed to gly residues. Residues Val306–Glu322 are compositionally biased toward polar residues. 2 stretches are compositionally biased toward low complexity: residues Gln334–Gln353 and Pro390–Arg410. The GYF domain occupies Pro459–Gly508. The stretch at Leu584–Arg746 forms a coiled coil. Disordered regions lie at residues Ala778–Pro811, Lys909–Val928, Ala1026–Ile1076, and Arg1087–Arg1106. Residues Val786–Ser801 are compositionally biased toward polar residues. Positions Ser1046–Gly1057 are enriched in low complexity.

This Caenorhabditis elegans protein is GYF domain-containing protein gyf-1.